Here is a 199-residue protein sequence, read N- to C-terminus: Ribosome biogenesis protein RLP24 (199 aa).

Residues 147–182 (KEQERAESVSEQEESEEEEEDMEIDSDEEEEEQLEK) form a disordered region. Positions 156–179 (SEQEESEEEEEDMEIDSDEEEEEQ) are enriched in acidic residues. Ser172 is modified (phosphoserine).

This sequence belongs to the eukaryotic ribosomal protein eL24 family. In terms of assembly, associated with nucleolar and cytoplasmic pre-60S particles. At the end of biogenesis it dissociates from cytoplasmic pre-60S particles and is likely to be exchanged for its ribosomal homolog, RPL24. Interacts (via C-terminus) with AFG2 (hexameric form); the interaction is direct, recruits AFG2 to pre-60S ribosomal particles and promotes AFG2 ATPase activity and RLP24 release from pre-60S ribosomal particles. Interacts with NOG1; the interaction is direct.

The protein localises to the cytoplasm. It is found in the nucleus. Involved in the biogenesis of the 60S ribosomal subunit. Ensures the docking of NOG1 to pre-60S ribosomal particles. Activates and recruits ATPase AFG2 to cytoplasmic pre-60S ribosomal particles. The sequence is that of Ribosome biogenesis protein RLP24 (RLP24) from Saccharomyces cerevisiae (strain ATCC 204508 / S288c) (Baker's yeast).